The primary structure comprises 151 residues: MNKTTRVMPAHKHIALVAHDNYKPELLRWVKENKDALQGHFLYATGTTGRILSKETGLAIKSLLSGPMGGDQQLGALISEGKIDMMIFFWDPLNAVPHDPDVKALLRIATVWNVPVAMNRASAKFMISAPQMEEEVSIEIPDYDAYLAERV.

The 146-residue stretch at 6–151 (RVMPAHKHIA…DYDAYLAERV (146 aa)) folds into the MGS-like domain. Residues H19, K23, 45–48 (TGTT), and 65–66 (SG) contribute to the substrate site. Catalysis depends on D71, which acts as the Proton donor/acceptor. H98 provides a ligand contact to substrate.

This sequence belongs to the methylglyoxal synthase family.

It carries out the reaction dihydroxyacetone phosphate = methylglyoxal + phosphate. Its function is as follows. Catalyzes the formation of methylglyoxal from dihydroxyacetone phosphate. In Aliivibrio fischeri (strain ATCC 700601 / ES114) (Vibrio fischeri), this protein is Methylglyoxal synthase.